The following is a 296-amino-acid chain: NAD kinase (296 aa).

Aspartate 72 acts as the Proton acceptor in catalysis. Residues 72-73 (DG), 146-147 (ND), arginine 157, lysine 174, aspartate 176, 187-192 (TAYALS), and glutamine 247 each bind NAD(+).

This sequence belongs to the NAD kinase family. A divalent metal cation serves as cofactor.

Its subcellular location is the cytoplasm. It catalyses the reaction NAD(+) + ATP = ADP + NADP(+) + H(+). Its function is as follows. Involved in the regulation of the intracellular balance of NAD and NADP, and is a key enzyme in the biosynthesis of NADP. Catalyzes specifically the phosphorylation on 2'-hydroxyl of the adenosine moiety of NAD to yield NADP. This is NAD kinase from Pseudomonas putida (strain GB-1).